Consider the following 213-residue polypeptide: Phosphoribosyl-dephospho-CoA transferase (213 aa).

Residues Asp135 and Asp137 contribute to the active site.

The protein belongs to the MdcG family.

The enzyme catalyses apo-[malonate decarboxylase ACP] + 2'-(5''-triphospho-alpha-D-ribosyl)-3'-dephospho-CoA = holo-[malonate decarboxylase ACP] + diphosphate. In terms of biological role, transfers 2'-(5-triphosphoribosyl)-3'-dephosphocoenzyme-A to the apo-[acyl-carrier-protein] of the malonate decarboxylase to yield holo-[acyl-carrier-protein]. This is Phosphoribosyl-dephospho-CoA transferase from Xanthomonas euvesicatoria pv. vesicatoria (strain 85-10) (Xanthomonas campestris pv. vesicatoria).